The sequence spans 399 residues: Bombesin receptor subtype-3 (399 aa).

Residues 1-41 are Extracellular-facing; that stretch reads MAQRQPHSPNQTLISITNDTESSSSVVSNDNTNKGWSGDNS. 2 N-linked (GlcNAc...) asparagine glycosylation sites follow: asparagine 10 and asparagine 18. Residues 42–63 form a helical membrane-spanning segment; that stretch reads PGIEALCAIYITYAVIISVGIL. Residues 64–82 lie on the Cytoplasmic side of the membrane; sequence GNAILIKVFFKTKSMQTVP. Residues 83–103 form a helical membrane-spanning segment; that stretch reads NIFITSLAFGDLLLLLTCVPV. Over 104 to 121 the chain is Extracellular; sequence DATHYLAEGWLFGRIGCK. The cysteines at positions 120 and 203 are disulfide-linked. A helical membrane pass occupies residues 122–143; it reads VLSFIRLTSVGVSVFTLTILSA. Topologically, residues 144–163 are cytoplasmic; that stretch reads DRYKAVVKPLERQPSNAILK. A helical membrane pass occupies residues 164–184; that stretch reads TCVKAGCVWIVSMIFALPEAI. Topologically, residues 185–220 are extracellular; sequence FSNVYTFRDPNKNMTFESCTSYPVSKKLLQEIHSLL. Residues 221 to 241 form a helical membrane-spanning segment; sequence CFLVFYIIPLSIISVYYSLIA. The Cytoplasmic segment spans residues 242 to 272; it reads RTLYKSTLNIPTEEQSHARKQIESRKRIART. Residues 273 to 293 form a helical membrane-spanning segment; it reads VLVLVALFALCWLPNHLLYLY. Topologically, residues 294–313 are extracellular; that stretch reads HSFTSQTYVDPSAMHFIFTI. A helical transmembrane segment spans residues 314-333; that stretch reads FSRVLAFSNSCVNPFALYWL. The Cytoplasmic portion of the chain corresponds to 334 to 399; the sequence is SKSFQKHFKA…CSVKQAEDRF (66 aa). A lipid anchor (S-palmitoyl cysteine) is attached at cysteine 347.

Belongs to the G-protein coupled receptor 1 family. Interacts with C6orf89. In germ cells in testis. Lung carcinoma cells.

It is found in the cell membrane. Role in sperm cell division, maturation, or function. This receptor mediates its action by association with G proteins that activate a phosphatidylinositol-calcium second messenger system. The sequence is that of Bombesin receptor subtype-3 (BRS3) from Homo sapiens (Human).